We begin with the raw amino-acid sequence, 276 residues long: MHFHFSKMHGLGNDFMVVDCLTQNIFFSPDLIRRLADRHRGIGFDQLLVVEAPYDPETDFHYRIFNADGSEVEQCGNGARCFARFVRMKGLTNKTSISVSTKKGKMILKVEDDDQITVNMGEPVFEPNKIPFKATQAEKTYLLRVDDKTLFSGAVSMGNPHCVTVVDDVDAYDVDKYGQLVESHERFPERVNAGFMQIISPNEVKLRVYERGAGETQACGSGACGAVAVGIMQELLGEEVKVSLPGGDLHIVWQGPGKPLFMTGPATHVYDGQLSI.

Residues Asn13, Gln46, and Asn66 each coordinate substrate. The active-site Proton donor is the Cys75. Substrate is bound by residues 76–77 (GN), Asn159, Asn192, and 210–211 (ER). Cys219 acts as the Proton acceptor in catalysis. Position 220–221 (220–221 (GS)) interacts with substrate.

It belongs to the diaminopimelate epimerase family. Homodimer.

The protein localises to the cytoplasm. The catalysed reaction is (2S,6S)-2,6-diaminopimelate = meso-2,6-diaminopimelate. It functions in the pathway amino-acid biosynthesis; L-lysine biosynthesis via DAP pathway; DL-2,6-diaminopimelate from LL-2,6-diaminopimelate: step 1/1. Catalyzes the stereoinversion of LL-2,6-diaminopimelate (L,L-DAP) to meso-diaminopimelate (meso-DAP), a precursor of L-lysine and an essential component of the bacterial peptidoglycan. This chain is Diaminopimelate epimerase, found in Aliivibrio fischeri (strain ATCC 700601 / ES114) (Vibrio fischeri).